The following is a 383-amino-acid chain: Pyruvate synthase subunit PorA (383 aa).

As to quaternary structure, heterotetramer of one alpha, one beta, one delta and one gamma chain.

The catalysed reaction is 2 oxidized [2Fe-2S]-[ferredoxin] + pyruvate + CoA = 2 reduced [2Fe-2S]-[ferredoxin] + acetyl-CoA + CO2 + H(+). The sequence is that of Pyruvate synthase subunit PorA (porA) from Methanothermobacter thermautotrophicus (strain ATCC 29096 / DSM 1053 / JCM 10044 / NBRC 100330 / Delta H) (Methanobacterium thermoautotrophicum).